The primary structure comprises 462 residues: Metacaspase-1 (462 aa).

Over residues M1–Q21 the composition is skewed to pro residues. Positions M1 to F150 are disordered. A compositionally biased stretch (low complexity) spans Q22 to Y33. 2 stretches are compositionally biased toward pro residues: residues P49 to S69 and S77 to P102. Catalysis depends on residues H253 and C309.

This sequence belongs to the peptidase C14B family.

In terms of biological role, involved in cell death (apoptosis). In Coccidioides immitis (strain RS) (Valley fever fungus), this protein is Metacaspase-1 (MCA1).